The primary structure comprises 113 residues: Hydrogenase maturation factor HypA (113 aa).

His-2 contributes to the Ni(2+) binding site. Zn(2+) contacts are provided by Cys-73, Cys-76, Cys-89, and Cys-92.

Belongs to the HypA/HybF family.

Its function is as follows. Involved in the maturation of [NiFe] hydrogenases. Required for nickel insertion into the metal center of the hydrogenase. In Legionella pneumophila subsp. pneumophila (strain Philadelphia 1 / ATCC 33152 / DSM 7513), this protein is Hydrogenase maturation factor HypA.